The following is a 235-amino-acid chain: MDIKVKDFEGPLDLLLHLVSKYEVDVYQVPIVDVIEQYLAYIETLQAMRLELAGEYMLMASQLMLIKSRRLLPKLVDKEPDEEDLEQELLGKIEEYSRFKALSQELASQHDKRALLFSKPKQELIFEQAVLQKDKTVMDLFLAFSQLMAAKQEAFKYNHTVIERDDYRIEDMMELIEARLELEQELTLTDLLKHCDHLNEAITLFLASLELIKRQLVGIEQTSHFGQIVLRKEIQ.

It belongs to the ScpA family. Component of a cohesin-like complex composed of ScpA, ScpB and the Smc homodimer, in which ScpA and ScpB bind to the head domain of Smc. The presence of the three proteins is required for the association of the complex with DNA.

The protein localises to the cytoplasm. In terms of biological role, participates in chromosomal partition during cell division. May act via the formation of a condensin-like complex containing Smc and ScpB that pull DNA away from mid-cell into both cell halves. In Streptococcus equi subsp. zooepidemicus (strain MGCS10565), this protein is Segregation and condensation protein A.